Reading from the N-terminus, the 120-residue chain is uncharacterized protein (120 aa).

Residues 8–28 form a helical membrane-spanning segment; it reads LIVKWFVGLMLIMMMVAVSLF.

The protein resides in the membrane. This is an uncharacterized protein from Bacillus anthracis.